The following is a 119-amino-acid chain: Centrocin 1 (119 aa).

The signal sequence occupies residues methionine 1–alanine 20. Residues lysine 21–glutamine 50 constitute a propeptide that is removed on maturation. Tryptophan 52 and tryptophan 53 each carry 6'-bromotryptophan. A disulfide bridge connects residues cysteine 75 and cysteine 110. Residues serine 81–glutamate 104 constitute a propeptide that is removed on maturation. Asparagine 117 carries the asparagine amide modification.

As to quaternary structure, heterodimer of a light and a heavy chain, probably disulfide-linked.

Has antimicrobial activity against Gram-negative bacteria, Gram-positive bacteria and against fungi with minimum inhibitory concentration (MIC) between 0.78 uM and 50 uM. Shows little hemolytic activity even at a concentration of 100 uM. Functionally, has no antimicrobial activity. Shows no hemolytic activity. The sequence is that of Centrocin 1 from Echinus esculentus (Sea urchin).